The chain runs to 230 residues: Cytidylate kinase (230 aa).

12–20 (GPSGAGKGT) contributes to the ATP binding site.

It belongs to the cytidylate kinase family. Type 1 subfamily.

The protein localises to the cytoplasm. The catalysed reaction is CMP + ATP = CDP + ADP. It catalyses the reaction dCMP + ATP = dCDP + ADP. This Shewanella halifaxensis (strain HAW-EB4) protein is Cytidylate kinase.